Reading from the N-terminus, the 419-residue chain is Glucose-1-phosphate adenylyltransferase (419 aa).

Residues tyrosine 107, glycine 172, 187–188 (EK), and serine 205 contribute to the alpha-D-glucose 1-phosphate site.

The protein belongs to the bacterial/plant glucose-1-phosphate adenylyltransferase family. Homotetramer.

It catalyses the reaction alpha-D-glucose 1-phosphate + ATP + H(+) = ADP-alpha-D-glucose + diphosphate. Its pathway is glycan biosynthesis; glycogen biosynthesis. Involved in the biosynthesis of ADP-glucose, a building block required for the elongation reactions to produce glycogen. Catalyzes the reaction between ATP and alpha-D-glucose 1-phosphate (G1P) to produce pyrophosphate and ADP-Glc. The protein is Glucose-1-phosphate adenylyltransferase of Novosphingobium aromaticivorans (strain ATCC 700278 / DSM 12444 / CCUG 56034 / CIP 105152 / NBRC 16084 / F199).